Reading from the N-terminus, the 156-residue chain is Small ribosomal subunit protein uS7 (156 aa).

The protein belongs to the universal ribosomal protein uS7 family. As to quaternary structure, part of the 30S ribosomal subunit. Contacts proteins S9 and S11.

One of the primary rRNA binding proteins, it binds directly to 16S rRNA where it nucleates assembly of the head domain of the 30S subunit. Is located at the subunit interface close to the decoding center, probably blocks exit of the E-site tRNA. This Thiomonas delicata (Thiomonas cuprina) protein is Small ribosomal subunit protein uS7.